The sequence spans 80 residues: Defensin-like protein 13 (80 aa).

Residues methionine 1 to alanine 29 form the signal peptide. Residue glutamine 30 is modified to Pyrrolidone carboxylic acid. Intrachain disulfides connect cysteine 33–cysteine 80, cysteine 44–cysteine 65, cysteine 50–cysteine 74, and cysteine 54–cysteine 76.

It belongs to the DEFL family. As to quaternary structure, forms oligomers in its native state. As to expression, expressed predominantly in siliques and dry seeds.

It localises to the secreted. Confers broad-spectrum resistance to pathogens. Possesses antifungal activity sensitive to inorganic cations in vitro. This Arabidopsis thaliana (Mouse-ear cress) protein is Defensin-like protein 13 (PDF1.1).